Here is a 273-residue protein sequence, read N- to C-terminus: Dermonecrotic toxin LdSicTox-alphaIB3aii (273 aa).

The active site involves histidine 5. Glutamate 25 and aspartate 27 together coordinate Mg(2+). Histidine 41 serves as the catalytic Nucleophile. 2 disulfide bridges follow: cysteine 45–cysteine 51 and cysteine 47–cysteine 190. Residue aspartate 85 participates in Mg(2+) binding.

This sequence belongs to the arthropod phospholipase D family. Class II subfamily. Requires Mg(2+) as cofactor. As to expression, expressed by the venom gland.

Its subcellular location is the secreted. It carries out the reaction an N-(acyl)-sphingosylphosphocholine = an N-(acyl)-sphingosyl-1,3-cyclic phosphate + choline. The catalysed reaction is an N-(acyl)-sphingosylphosphoethanolamine = an N-(acyl)-sphingosyl-1,3-cyclic phosphate + ethanolamine. The enzyme catalyses a 1-acyl-sn-glycero-3-phosphocholine = a 1-acyl-sn-glycero-2,3-cyclic phosphate + choline. It catalyses the reaction a 1-acyl-sn-glycero-3-phosphoethanolamine = a 1-acyl-sn-glycero-2,3-cyclic phosphate + ethanolamine. Dermonecrotic toxins cleave the phosphodiester linkage between the phosphate and headgroup of certain phospholipids (sphingolipid and lysolipid substrates), forming an alcohol (often choline) and a cyclic phosphate. This toxin acts on sphingomyelin (SM). It may also act on ceramide phosphoethanolamine (CPE), lysophosphatidylcholine (LPC) and lysophosphatidylethanolamine (LPE), but not on lysophosphatidylserine (LPS), and lysophosphatidylglycerol (LPG). It acts by transphosphatidylation, releasing exclusively cyclic phosphate products as second products. Induces dermonecrosis, hemolysis, increased vascular permeability, edema, inflammatory response, and platelet aggregation. The sequence is that of Dermonecrotic toxin LdSicTox-alphaIB3aii from Loxosceles deserta (Desert recluse spider).